A 138-amino-acid polypeptide reads, in one-letter code: Putative pre-16S rRNA nuclease (138 aa).

This sequence belongs to the YqgF nuclease family.

Its subcellular location is the cytoplasm. In terms of biological role, could be a nuclease involved in processing of the 5'-end of pre-16S rRNA. In Bacillus pumilus (strain SAFR-032), this protein is Putative pre-16S rRNA nuclease.